The primary structure comprises 361 residues: Mitogen-activated protein kinase 14 (361 aa).

A Protein kinase domain is found at 25–309; the sequence is YQNLTPVGSG…AAEALAHSYF (285 aa). ATP contacts are provided by residues 31 to 39 and Lys-54; that span reads VGSGAYGSV. The Proton acceptor role is filled by Asp-151. Residue Thr-181 is modified to Phosphothreonine. The TXY signature appears at 181–183; that stretch reads TGY. Tyr-183 bears the Phosphotyrosine mark.

It belongs to the protein kinase superfamily. CMGC Ser/Thr protein kinase family. MAP kinase subfamily. Mg(2+) serves as cofactor. Dually phosphorylated on Thr-181 and Tyr-183, which activates the enzyme.

It catalyses the reaction L-seryl-[protein] + ATP = O-phospho-L-seryl-[protein] + ADP + H(+). The catalysed reaction is L-threonyl-[protein] + ATP = O-phospho-L-threonyl-[protein] + ADP + H(+). Its activity is regulated as follows. Activated by tyrosine and threonine phosphorylation. Functionally, serine/threonine kinase which acts as an essential component of the MAP kinase signal transduction pathway. mapk14a is one of the four p38 MAPKs which play an important role in the cascades of cellular responses evoked by extracellular stimuli such as pro-inflammatory cytokines or physical stress leading to direct activation of transcription factors. Accordingly, p38 MAPKs phosphorylate a broad range of proteins and it has been estimated that they may have approximately 200 to 300 substrates each. Some of the targets are downstream kinases which are activated through phosphorylation and further phosphorylate additional targets. MPK2 is activated by upstream MAPKK/MAPKKK and stimulates MAPKAP kinase 2 to phosphorylate small heat shock proteins. Does not phosphorylate myelin basic protein or MAPKAP kinase 1. The polypeptide is Mitogen-activated protein kinase 14 (mapk14) (Xenopus laevis (African clawed frog)).